We begin with the raw amino-acid sequence, 473 residues long: Sulfate adenylyltransferase subunit 1 (473 aa).

The tr-type G domain occupies 19 to 238; it reads KTLLKFLTCG…IKIKNSISSE (220 aa). The G1 stretch occupies residues 28 to 35; that stretch reads GSVDDGKS. 28-35 serves as a coordination point for GTP; that stretch reads GSVDDGKS. The G2 stretch occupies residues 86–90; sequence GITID. A G3 region spans residues 107–110; sequence DTPG. Residues 107-111 and 162-165 contribute to the GTP site; these read DTPGH and NKMD. Residues 162–165 form a G4 region; that stretch reads NKMD. A G5 region spans residues 200–202; sequence SAL.

This sequence belongs to the TRAFAC class translation factor GTPase superfamily. Classic translation factor GTPase family. CysN/NodQ subfamily. In terms of assembly, heterodimer composed of CysD, the smaller subunit, and CysN.

The catalysed reaction is sulfate + ATP + H(+) = adenosine 5'-phosphosulfate + diphosphate. It functions in the pathway sulfur metabolism; hydrogen sulfide biosynthesis; sulfite from sulfate: step 1/3. Its function is as follows. With CysD forms the ATP sulfurylase (ATPS) that catalyzes the adenylation of sulfate producing adenosine 5'-phosphosulfate (APS) and diphosphate, the first enzymatic step in sulfur assimilation pathway. APS synthesis involves the formation of a high-energy phosphoric-sulfuric acid anhydride bond driven by GTP hydrolysis by CysN coupled to ATP hydrolysis by CysD. This is Sulfate adenylyltransferase subunit 1 from Buchnera aphidicola subsp. Acyrthosiphon pisum (strain Tuc7).